The primary structure comprises 319 residues: 3'-5' exoribonuclease YhaM (319 aa).

Residues 12–90 (EAVDGYLLIK…QLKIASIRPT (79 aa)) constitute a DNA-binding region (OB). The region spanning 163-279 (HVVSMLRIGK…LHLIDNIDAK (117 aa)) is the HD domain.

Belongs to the YhaM family.

Shows a 3'-5' exoribonuclease activity. The chain is 3'-5' exoribonuclease YhaM from Shouchella clausii (strain KSM-K16) (Alkalihalobacillus clausii).